Reading from the N-terminus, the 4074-residue chain is Fibrocystin (4074 aa).

Residues 1-22 (MIVWLISLMSIEILLLAGPALS) form the signal peptide. N-linked (GlcNAc...) asparagine glycosylation is found at asparagine 54 and asparagine 224. An IPT/TIG 1 domain is found at 258–310 (EILSVFPETGSLGGKTDIIITGDFFDNPALVTIAGVPCDIRHMSPRKIECTTR). The 161-residue stretch at 323–483 (AGNRGLLFEV…TWLNPDVVST (161 aa)) folds into the PA14 domain. N-linked (GlcNAc...) asparagine glycans are attached at residues asparagine 355, asparagine 385, asparagine 518, asparagine 527, asparagine 640, asparagine 710, asparagine 741, asparagine 822, asparagine 829, asparagine 868, asparagine 953, asparagine 966, asparagine 976, asparagine 1006, asparagine 1059, asparagine 1083, asparagine 1115, asparagine 1134, asparagine 1233, asparagine 1240, asparagine 1274, asparagine 1284, asparagine 1308, asparagine 1319, asparagine 1342, asparagine 1373, asparagine 1445, asparagine 1456, asparagine 1471, asparagine 1490, asparagine 1528, asparagine 1560, asparagine 1578, asparagine 1598, asparagine 1627, asparagine 1694, asparagine 1760, asparagine 1775, asparagine 1789, asparagine 1875, asparagine 1915, asparagine 1941, asparagine 1955, asparagine 2030, asparagine 2111, and asparagine 2140. Positions 944 to 1000 (SLLIYIFGINFSGDPQALEIMVNKTNCKVIFSNQTNVICQTDLLPVGMHRLFMVVRP) constitute an IPT/TIG 2 domain. IPT/TIG domains follow at residues 1018 to 1101 (PRLD…AFTY), 1107 to 1186 (PVIT…RSPG), and 1199 to 1274 (SIEP…WAGN). Residues 1385–1464 (PWIMAISPTH…LNVTVIVNGL (80 aa)) enclose the IPT/TIG 6 domain. The 69-residue stretch at 1573 to 1641 (HYFPKNFSIH…LVIEVDGLSY (69 aa)) folds into the IPT/TIG 7 domain. One can recognise a G8 1 domain in the interval 1928–2049 (HSWFPERVPQ…PEVTFTHLQA (122 aa)). 5 PbH1 repeats span residues 2245–2267 (TLGL…LVGT), 2288–2322 (EQGN…YILN), 2351–2373 (APLL…FIYP), 2383–2404 (RGPT…RISR), and 2405–2427 (SSNL…DILE). Asparagine 2390 carries an N-linked (GlcNAc...) asparagine glycan. N-linked (GlcNAc...) asparagine glycosylation is found at asparagine 2431, asparagine 2467, asparagine 2531, asparagine 2549, asparagine 2579, asparagine 2591, asparagine 2749, asparagine 2764, asparagine 2972, and asparagine 3004. One copy of the PbH1 6 repeat lies at 2460 to 2483 (RWELIISNTTFVNFDLTDCVSIRT). Positions 2743–2869 (EGWGGHNHTI…PKKSWTRLAA (127 aa)) constitute a G8 2 domain. The stretch at 3029–3051 (SHGIILNDNIVFGTVGHGIDLEG) is one PbH1 7 repeat. Residue asparagine 3053 is glycosylated (N-linked (GlcNAc...) asparagine). The PbH1 8 repeat unit spans residues 3082–3104 (AKDINLYGNVVAGSERIGFHIQG). N-linked (GlcNAc...) asparagine glycans are attached at residues asparagine 3136, asparagine 3165, asparagine 3221, asparagine 3484, asparagine 3702, asparagine 3721, and asparagine 3833. The stretch at 3158 to 3183 (ENSVEIENITLVDNSIGLLATVYVSS) is one PbH1 9 repeat. A helical transmembrane segment spans residues 3854–3874 (IILAVSLCSVASWLALCCLVC). The segment at 3871–3888 (CLVCCWFRKSKSRKIKSE) is ciliary targeting sequence (CST). Disordered stretches follow at residues 3896–3919 (NDQK…KEDT), 3943–3965 (NGVS…REED), and 4031–4074 (LQGQ…QEQL). Basic and acidic residues-rich tracts occupy residues 3910 to 3919 (RSQETKKEDT) and 3954 to 3965 (AVREEGSSREED). Residues 3947–3976 (RRKVSRRAVREEGSSREEDVVPAPRIISIT) are nuclear localization signal (NLS).

In terms of assembly, interacts with CAMLG. Interacts with PKD2. Interacts (via CST) with ARF4; this interaction allows an efficient PKHD1 trafficking to the cilium. Interacts (via CST) with RAB8A; this interaction controls trafficking through the endomembrane systeme and to the cilium. Interacts (via CST) with TULP3; this interaction allows PKHD1 trafficking to the cilium. In terms of processing, palmitoylated. Palmitoylation facilitates the trafficking to the cilia and membrane targeting. N-glycosylated. Post-translationally, several proteolytic cleavages occur within the extracellular domain, whereas at least one cleavage occurs within the cytoplasmic domain. Cleaved by a probable proprotein convertase which produces an extracellular domain (polyductin extracellular domain, (PECD)) and a C-terminal fragment (polyductin transmembrane fragment (PTM)) which are tethered together by disulfide bonds. This extracellular domain (PECD) is then shed from the primary cilium by activation of a member of the ADAM metalloproteinase disintegrins family, resulting in concomitant release of an intra-cellular C-terminal fragment (ICD) via a gamma-secretase-dependent process. The proteolytic cleavage of the C-terminal intracellular fragment (ICD) is controlled by cytosolic calcium concentration and activation of PKC.

The protein resides in the cell membrane. The protein localises to the cytoplasm. It is found in the apical cell membrane. Its subcellular location is the cytoskeleton. It localises to the cilium basal body. The protein resides in the cell projection. The protein localises to the cilium. It is found in the spindle. Its subcellular location is the chromosome. It localises to the centromere. The protein resides in the nucleus. The protein localises to the secreted. It is found in the extracellular exosome. Its subcellular location is the endoplasmic reticulum. It localises to the golgi apparatus. In terms of biological role, promotes ciliogenesis in renal epithelial cells and therefore participates in the tubules formation and/ or ensures the maintenance of the architecture of the lumen of the kidney. Has an impact on cellular symmetry by ensuring correct bipolar cell division through the regulation of centrosome duplication and mitotic spindle assembly and by maintaining oriented cell division (OCD) during tubular elongation through planar cell polarity (PCP) pathway. During epithelial cell morphogenesis, it also regulates cell-cell and cell-matrix adhesion and participates in cell motility. Promotes cell-cell contact through the positive regulation of PTK2 kinase activity leading to either positive regulation of epithelial cell proliferation through the HRAS/RAF1 pathways, or negative regulation of apoptosis through the PDK1/AKT1 pathway. May act in collecting-duct and biliary differentiation. May participate in the regulation of the cholangiocytes proliferation and the CCN2 production in an CXCL8-dependent manner. This is Fibrocystin from Canis lupus familiaris (Dog).